The primary structure comprises 649 residues: MSNCLQLNTSCVGCGSQSDLYGSSCRHMTLCLKCGRTMAQNKSKCHECGTVVTRLIREYNVRAAAPTDKNYFIGRFVTGLPNFKKGSENKWSLRKDIPQGRQFTDAQREKLKNKPWILEDETGQFQYQGHLEGSQSATYYLLVMQNKEFVAIPAGSWYNFNKVAQYKQLTLEEAEEKMKNRRKTADGYQRWMMKAANNGPALFGEVDNEKESGGTSGGGGRGRKKSSGGDEEEGNVSDRGDEDEEEEASRKSRLGLNRKSNDDDDEEGPRGGDLDMDDDDIEKGDDWEHEEIFTDDDEAVGNDPEEREDLLAPEIPAPPEIKQDEDDEENEEEEGGLSKSGKELKKLLGKANGLDESDEDDDDDSDDEEETNYGTVTNSKQKEAAKEEPVDNAPAKPAPSGPPRGTPPAKPSKGKRKLNDGDSKKPSSSVQKKVKTENDPKSSLKEERANTVSKSNTPTKAVKAEPASAPASSSSAATGPVTEDEIRAVLMEKKQVTTQDLVSRFKARLKTKEDKNAFANILRKISKIQKNAGSQNFVVLREKCQPKPGKRESRVNKLNIRSNLQPRKMELVTEDEIRKVLMEKKQLTTLELVMRFKERLTTTEDKDSFSHILKKIAKLQKNPGSEKFVVVLRDNVTPLASDLTRLSIS.

A disordered region spans residues 201 to 480 (ALFGEVDNEK…ASSSSAATGP (280 aa)). Composition is skewed to acidic residues over residues 229–247 (GDEE…EEEE), 274–283 (LDMDDDDIEK), 293–308 (FTDD…EERE), 323–335 (QDED…EEEG), and 355–371 (DESD…EEET). Residues 380–389 (KQKEAAKEEP) show a composition bias toward basic and acidic residues. Residues 396–410 (KPAPSGPPRGTPPAK) show a composition bias toward pro residues. Positions 434 to 449 (VKTENDPKSSLKEERA) are enriched in basic and acidic residues. Residues 450–459 (NTVSKSNTPT) show a composition bias toward polar residues. Over residues 466-477 (PASAPASSSSAA) the composition is skewed to low complexity. Residues 466–543 (PASAPASSSS…SQNFVVLREK (78 aa)) form a required for CPL3 and CPL4 binding region.

Belongs to the TFIIF alpha subunit family. As to quaternary structure, heterodimer of an alpha and a beta subunit. Interacts with CPL3 and CPL4.

The protein resides in the nucleus. TFIIF is a general transcription initiation factor that binds to RNA polymerase II and helps to recruit it to the initiation complex in collaboration with TFIIB. It promotes transcription elongation. In Arabidopsis thaliana (Mouse-ear cress), this protein is Transcription initiation factor IIF subunit alpha (RAP74).